Reading from the N-terminus, the 657-residue chain is Serine/threonine kinase NLK (657 aa).

Residues 208 to 554 (SQPDRPIGYG…VEEALSHPYL (347 aa)) form the Protein kinase domain. ATP-binding positions include 214-222 (IGYGAFGVV) and K237. D391 (proton acceptor) is an active-site residue.

It belongs to the protein kinase superfamily. Ser/Thr protein kinase family. In terms of assembly, component of the beta-catenin-lit-1 complex (also called the lit-1/wrm-1 complex or the wrm-1/lit-1 kinase complex) at least composed of lit-1 and wrm-1. Interacts with wrm-1 (via N-terminus); the interaction is direct and activates lit-1 kinase activity which leads to the phosphorylation of pop-1. This promotes pop-1 interaction with par-5 and translocation of pop-1 from the nucleus to the cytoplasm. Interacts with pop-1 (when phosphorylated on 'Ser-125'); the interaction is dependent on the beta-catenin-lit-1 complex. Mg(2+) serves as cofactor.

The protein localises to the cytoplasm. The protein resides in the cell cortex. It is found in the nucleus. It carries out the reaction L-seryl-[protein] + ATP = O-phospho-L-seryl-[protein] + ADP + H(+). It catalyses the reaction L-threonyl-[protein] + ATP = O-phospho-L-threonyl-[protein] + ADP + H(+). Has a role in the Wnt signaling pathway controlling the asymmetry of cell divisions during embryogenesis. Operates in the AB and EMS cell lineages influencing cell specification. Required for body wall muscle development, endoderm development, pop-1 asymmetry and T-cell division asymmetry. Component of the beta-catenin-lit-1 complex which promotes the phosphorylation, down-regulation and subcellular relocation of pop-1. Regulates plp-1 nuclear localization in embryos. Plays a role in male tail tip morphogenesis. This chain is Serine/threonine kinase NLK, found in Caenorhabditis briggsae.